We begin with the raw amino-acid sequence, 659 residues long: Cyclic-di-AMP phosphodiesterase GdpP (659 aa).

Over 1 to 8 (MPSFYEKP) the chain is Cytoplasmic. 2 consecutive transmembrane segments (helical) span residues 9-29 (LFRY…LISF) and 30-50 (YFNW…LFFI). Residues 51-659 (KRADSLIRQE…DEYFEGGVQR (609 aa)) lie on the Cytoplasmic side of the membrane. Residues 84–149 (PIGIMLFNDQ…NDRKFRVVIK (66 aa)) are PAS-like domain, required for heme-binding. The GGDEF domain maps to 173–301 (ERTVLAYIFL…GGDQVAIKLP (129 aa)). A DHH domain region spans residues 339–496 (NVIIMGHKFP…IEATALLAGI (158 aa)). H345, D349, D351, D420, H444, and D499 together coordinate Mn(2+). The interval 591–646 (FAVARRDEQTVCISARSLGEVNVQIIMEALEGGGHLTNAATQLSGISVSEALERLK) is DHHA1 domain.

Belongs to the GdpP/PdeA phosphodiesterase family. Requires heme b as cofactor. The cofactor is Mg(2+). Mn(2+) is required as a cofactor.

Its subcellular location is the cell membrane. The catalysed reaction is 3',3'-c-di-AMP + H2O = 5'-O-phosphonoadenylyl-(3'-&gt;5')-adenosine + H(+). Phosphodiesterase (PDE) inhibited by Zn(2+), Ca(2+) inhibits in the presence of Mg(2+) but not Mn(2+); c-di-AMP PDE activity is competitively inhibited by ppGpp. Heme binding (by Fe(2+) or Fe(3+) heme) inhibits PDE, activity is partially restored by KCN or NO only for Fe(2+) heme. Binding of NO to Fe(2+) heme switches from hexa- to pentacoordination. Heme binding inhibits the ATPase activity. In terms of biological role, has phosphodiesterase (PDE) activity against cyclic-di-AMP (c-di-AMP) and to a much lesser extent against cyclic-di-GMP (c-di-GMP) in the DHH/DHHA1 domains. Also has ATPase activity, probably via the GGDEF domain. Overexpression leads to increased sensitivity to methyl methanesulfonate (MMS) and H(2)O(2). Overexpression leads to extreme sensitivity to the beta-lactam antibiotic cefuroxime (CEF), probably dependent on PDE activity. May monitor cellular heme or NO levels. In B.subtilis c-di-AMP is a second messenger that mediates growth, DNA repair and cell wall homeostasis; it is toxic when present in excess. The protein is Cyclic-di-AMP phosphodiesterase GdpP of Bacillus subtilis (strain 168).